A 457-amino-acid chain; its full sequence is tRNA modification GTPase MnmE (457 aa).

(6S)-5-formyl-5,6,7,8-tetrahydrofolate is bound by residues R23, E85, and R124. The 157-residue stretch at 220–376 (GALVVLAGQV…LVTAIRAAVL (157 aa)) folds into the TrmE-type G domain. N230 is a K(+) binding site. GTP is bound by residues 230-235 (NAGKSS), 249-255 (TDLPGTT), and 274-277 (DTAG). Position 234 (S234) interacts with Mg(2+). K(+) is bound by residues T249, L251, and T254. A Mg(2+)-binding site is contributed by T255. A (6S)-5-formyl-5,6,7,8-tetrahydrofolate-binding site is contributed by K457.

It belongs to the TRAFAC class TrmE-Era-EngA-EngB-Septin-like GTPase superfamily. TrmE GTPase family. Homodimer. Heterotetramer of two MnmE and two MnmG subunits. K(+) serves as cofactor.

Its subcellular location is the cytoplasm. Exhibits a very high intrinsic GTPase hydrolysis rate. Involved in the addition of a carboxymethylaminomethyl (cmnm) group at the wobble position (U34) of certain tRNAs, forming tRNA-cmnm(5)s(2)U34. This is tRNA modification GTPase MnmE from Nitratidesulfovibrio vulgaris (strain ATCC 29579 / DSM 644 / CCUG 34227 / NCIMB 8303 / VKM B-1760 / Hildenborough) (Desulfovibrio vulgaris).